We begin with the raw amino-acid sequence, 335 residues long: Spliceosome-associated protein 49 (335 aa).

2 RRM domains span residues 13 to 84 (IYLG…PIRV) and 101 to 172 (LFVG…PITV). Residues 204–223 (VTPQSTLPPGFSPATPAPTS) form a disordered region.

This sequence belongs to the SF3B4 family.

The protein resides in the nucleus. The polypeptide is Spliceosome-associated protein 49 (sap49) (Schizosaccharomyces pombe (strain 972 / ATCC 24843) (Fission yeast)).